Here is a 31-residue protein sequence, read N- to C-terminus: NNSKAKCGDLAGWSKLTFKSADECTKTGQKS.

The protein localises to the secreted. It is found in the nematocyst. It localises to the target cell membrane. In terms of biological role, cytolysin that shows weak hemolysis and weak myonecrosis. This chain is Cytolysin Oshem 2, found in Olindias sambaquiensis (Hydromedusa).